Here is a 303-residue protein sequence, read N- to C-terminus: UDP-N-acetylenolpyruvoylglucosamine reductase (303 aa).

The region spanning Lys-29–Lys-196 is the FAD-binding PCMH-type domain. The active site involves Arg-174. Ser-225 serves as the catalytic Proton donor. Glu-295 is an active-site residue.

Belongs to the MurB family. The cofactor is FAD.

It localises to the cytoplasm. The enzyme catalyses UDP-N-acetyl-alpha-D-muramate + NADP(+) = UDP-N-acetyl-3-O-(1-carboxyvinyl)-alpha-D-glucosamine + NADPH + H(+). Its pathway is cell wall biogenesis; peptidoglycan biosynthesis. Its function is as follows. Cell wall formation. The chain is UDP-N-acetylenolpyruvoylglucosamine reductase from Bacillus licheniformis (strain ATCC 14580 / DSM 13 / JCM 2505 / CCUG 7422 / NBRC 12200 / NCIMB 9375 / NCTC 10341 / NRRL NRS-1264 / Gibson 46).